Reading from the N-terminus, the 1032-residue chain is Integrin alpha-4 (1032 aa).

The first 33 residues, 1–33 (MAWEARREPGPRRAAVRETVMLLLCLGVPTGRP), serve as a signal peptide directing secretion. FG-GAP repeat units follow at residues 35–100 (NVDT…PGQT), 110–177 (NGEP…TELS), 185–237 (QDYV…KYKA), 238–291 (FLDK…EKEL), 292–351 (NILH…GAVM), 355–412 (ETNL…GISS), and 416–478 (QRIE…HPES). At 35 to 977 (NVDTESALLY…HHQRPKRYFT (943 aa)) the chain is on the extracellular side. The N-linked (GlcNAc...) asparagine glycan is linked to N79. An intrachain disulfide couples C91 to C101. N138 carries an N-linked (GlcNAc...) asparagine glycan. Intrachain disulfides connect C144–C165 and C183–C198. N229 is a glycosylation site (N-linked (GlcNAc...) asparagine). 13 residues coordinate Ca(2+): D314, N316, D318, D322, D377, D379, D381, D385, D439, D441, N443, Y445, and D447. Residue N480 is glycosylated (N-linked (GlcNAc...) asparagine). Cystine bridges form between C486–C495 and C501–C557. Residues N518 and N538 are each glycosylated (N-linked (GlcNAc...) asparagine). The SG1 signature appears at 606 to 616 (KKEKDIMKKTI). An intrachain disulfide couples C622 to C627. N626, N645, and N660 each carry an N-linked (GlcNAc...) asparagine glycan. An intrachain disulfide couples C698 to C711. N-linked (GlcNAc...) asparagine glycans are attached at residues N806 and N821. Cystine bridges form between C852–C890 and C897–C902. Residues 978-1001 (IVIISSSLLLGLIVLLLISYVMWK) form a helical membrane-spanning segment. At 1002 to 1032 (AGFFKRQYKSILQEENRRDSWSYINSKSNDD) the chain is on the cytoplasmic side. A GFFKR motif motif is present at residues 1003 to 1007 (GFFKR). S1021 is subject to Phosphoserine.

The protein belongs to the integrin alpha chain family. As to quaternary structure, heterodimer of an alpha and a beta subunit. The alpha subunit can sometimes be cleaved into two non-covalently associated fragments. Alpha-4 associates with either beta-1 or beta-7. Alpha-4 interacts with PXN, LPXN, and TGFB1I1/HIC5. Interacts with CSPG4 through CSPG4 chondroitin sulfate glycosaminoglycan. Interacts with JAML; integrin alpha-4/beta-1 may regulate leukocyte to endothelial cells adhesion by controlling JAML homodimerization. ITGA4:ITGB1 is found in a ternary complex with CX3CR1 and CX3CL1. Interacts with MDK. ITGA4:ITGB1 interacts with MDK; this interaction mediates MDK-induced osteoblast cells migration through PXN phosphorylation. Integrin ITGA4:ITGB1 interacts with SVEP1 (via Sushi domain 21); thereby inhibits Ca(2+) intracellular signaling and as a result represses vasocontraction. ITGA4:ITGB1 interacts with SELP. ITGA4:ITGB1 interacts with BCAM. In terms of processing, phosphorylation on Ser-1027 inhibits PXN binding. In terms of tissue distribution, expressed in vascular smooth muscle cells (at protein level).

It localises to the membrane. Functionally, integrins alpha-4/beta-1 (VLA-4) and alpha-4/beta-7 are receptors for fibronectin. They recognize one or more domains within the alternatively spliced CS-1 and CS-5 regions of fibronectin. They are also receptors for VCAM1. Integrin alpha-4/beta-1 recognizes the sequence Q-I-D-S in VCAM1. Integrin alpha-4/beta-7 is also a receptor for MADCAM1. It recognizes the sequence L-D-T in MADCAM1. On activated endothelial cells integrin VLA-4 triggers homotypic aggregation for most VLA-4-positive leukocyte cell lines. It may also participate in cytolytic T-cell interactions with target cells. ITGA4:ITGB1 binds to fractalkine (CX3CL1) and may act as its coreceptor in CX3CR1-dependent fractalkine signaling. ITGA4:ITGB1 binds to PLA2G2A via a site (site 2) which is distinct from the classical ligand-binding site (site 1) and this induces integrin conformational changes and enhanced ligand binding to site 1. Integrin ITGA4:ITGB1 represses PRKCA-mediated L-type voltage-gated channel Ca(2+) influx and ROCK-mediated calcium sensitivity in vascular smooth muscle cells via its interaction with SVEP1, thereby inhibiting vasocontraction. In Homo sapiens (Human), this protein is Integrin alpha-4 (ITGA4).